The following is a 99-amino-acid chain: Aspartyl/glutamyl-tRNA(Asn/Gln) amidotransferase subunit C (99 aa).

Belongs to the GatC family. In terms of assembly, heterotrimer of A, B and C subunits.

The enzyme catalyses L-glutamyl-tRNA(Gln) + L-glutamine + ATP + H2O = L-glutaminyl-tRNA(Gln) + L-glutamate + ADP + phosphate + H(+). It carries out the reaction L-aspartyl-tRNA(Asn) + L-glutamine + ATP + H2O = L-asparaginyl-tRNA(Asn) + L-glutamate + ADP + phosphate + 2 H(+). Its function is as follows. Allows the formation of correctly charged Asn-tRNA(Asn) or Gln-tRNA(Gln) through the transamidation of misacylated Asp-tRNA(Asn) or Glu-tRNA(Gln) in organisms which lack either or both of asparaginyl-tRNA or glutaminyl-tRNA synthetases. The reaction takes place in the presence of glutamine and ATP through an activated phospho-Asp-tRNA(Asn) or phospho-Glu-tRNA(Gln). This chain is Aspartyl/glutamyl-tRNA(Asn/Gln) amidotransferase subunit C, found in Corynebacterium diphtheriae (strain ATCC 700971 / NCTC 13129 / Biotype gravis).